We begin with the raw amino-acid sequence, 512 residues long: Ankyrin repeat domain-containing protein SOWAHC (512 aa).

Serine 82 and serine 125 each carry phosphoserine. Residues 126–248 form a disordered region; the sequence is LGLGGEVSDQ…AEEESSVGAS (123 aa). Low complexity predominate over residues 173–186; it reads PPQGEAEGGSSPSG. At serine 205 the chain carries Phosphoserine. Positions 214-228 are enriched in gly residues; the sequence is PGDGNAGGRSRGGGD. Residues 229–248 are compositionally biased toward low complexity; it reads SDTASLASSSAEEESSVGAS. ANK repeat units follow at residues 288–317 and 327–357; these read TGFT…KHQL and GGYT…DVDI. Arginine 395 is modified (omega-N-methylarginine). The segment at 427–500 is disordered; it reads HVPEGWTGGS…EERSLRGYSS (74 aa). Over residues 453-462 the composition is skewed to basic residues; sequence MKPRLNKIRF. Residues 481-492 are compositionally biased toward acidic residues; it reads EEGEEEEEEEEE.

The protein belongs to the SOWAH family.

The sequence is that of Ankyrin repeat domain-containing protein SOWAHC (Sowahc) from Mus musculus (Mouse).